A 324-amino-acid chain; its full sequence is Galactosylgalactosylxylosylprotein 3-beta-glucuronosyltransferase 2 (324 aa).

Residues 1–2 (MK) lie on the Cytoplasmic side of the membrane. Residues 3–23 (SALCSRFFILLPWILIVIIML) traverse the membrane as a helical; Signal-anchor for type II membrane protein segment. Residues 24-324 (DVDPRRPAPQ…YHLDTVNIEV (301 aa)) lie on the Lumenal side of the membrane. The segment at 50-78 (SRVPLRRSSPGRDAAEKRNESRPQLQPEP) is disordered. A glycan (N-linked (GlcNAc...) asparagine) is linked at Asn-68. UDP-alpha-D-glucuronate-binding positions include 88-90 (PTY), Asp-119, Arg-156, Arg-161, and 186-188 (DDD). Asp-188 serves as a coordination point for Mn(2+). Positions 235–244 (WREDRPFAID) are interaction with galactose moiety of substrate glycoprotein. Residue Glu-274 is the Proton donor/acceptor of the active site. Asn-293 carries an N-linked (GlcNAc...) asparagine glycan. Residue 301–303 (HTR) coordinates UDP-alpha-D-glucuronate.

This sequence belongs to the glycosyltransferase 43 family. In terms of assembly, homodimer. Mn(2+) serves as cofactor. Expressed in brain, but not in liver and kidney.

It localises to the golgi apparatus membrane. The enzyme catalyses 3-O-(beta-D-galactosyl-(1-&gt;3)-beta-D-galactosyl-(1-&gt;4)-beta-D-xylosyl)-L-seryl-[protein] + UDP-alpha-D-glucuronate = 3-O-(beta-D-GlcA-(1-&gt;3)-beta-D-Gal-(1-&gt;3)-beta-D-Gal-(1-&gt;4)-beta-D-Xyl)-L-seryl-[protein] + UDP + H(+). Its pathway is protein modification; protein glycosylation. Functionally, involved in the biosynthesis of L2/HNK-1 carbohydrate epitope on both glycolipids and glycoproteins. The sequence is that of Galactosylgalactosylxylosylprotein 3-beta-glucuronosyltransferase 2 (B3gat2) from Mus musculus (Mouse).